The chain runs to 2118 residues: Cilia- and flagella-associated protein 65 (2118 aa).

The helical transmembrane segment at 6–26 threads the bilayer; sequence GSLRALLLAAAAAAAAAAGAV. The MSP domain occupies 615-736; that stretch reads FLHSNPEFGP…HTPRLTTDLP (122 aa). 3 disordered regions span residues 1007–1029, 1764–1909, and 1924–1958; these read APLL…LDAG, SGGS…DDFA, and AGGG…APPR. The span at 1825 to 1834 shows a compositional bias: gly residues; sequence GGAGGAPGGD. The segment covering 1840–1849 has biased composition (low complexity); that stretch reads RPGTPSMTAA. Positions 1850-1859 are enriched in basic residues; sequence AHHHHHHPRH. Low complexity-rich tracts occupy residues 1892–1902 and 1936–1949; these read SISGAPDPDSA and PGGS…ELAP. A coiled-coil region spans residues 2016 to 2045; that stretch reads AVRAAAEAARAEAEARAAAEAATKAAAEAE.

This sequence belongs to the CFAP65 family.

The protein localises to the cell projection. The protein resides in the cilium. It is found in the flagellum membrane. It localises to the cytoplasm. Its function is as follows. May play a role in flagellar formation and mobility. This is Cilia- and flagella-associated protein 65 from Chlamydomonas reinhardtii (Chlamydomonas smithii).